Consider the following 617-residue polypeptide: MAVDKVIVKQRNIILVGIPIDESGVEVLKWALEEVAKHGDCVVVVHVCFTYYRALKSKSSLDRYLKPYIEFCSTKKIELKGEVLKGNSVLGVLVKEAKRYNAMSVVVGVKQQSKLSLKIAKGCAKELPSTTDILAIHRGNIVFRRSNHYQLPLAQKISSRPSSELSEGFSDKDLAKTTGQEKRKISGRSLSLPSVEVVDQTPGWPLLRTSTLATPMVQHQTRKISVVNWVMSLPERFPHHPNQTCQQSFCDKQLKDILKDINRWFSYDVLKTATSDFSLENLIGKGGCNEVYKGFLEDGKGVAVKILKPSVKEAVKEFVHEVSIVSSLSHSNISPLIGVCVHYNDLISVYNLSSKGSLEETLQGKHVLRWEERLKIAIGLGEALDYLHNQCSNPVIHRDVKSSNVLLSDEFEPQLSDFGLSMWGSKSCRYTIQRDVVGTFGYLAPEYFMYGKVSDKVDVYAFGVVLLELISGRTSISSDSPRGQESLVMWAKPMIEKGNAKELLDPNIAGTFDEDQFHKMVLAATHCLTRAATYRPNIKEILKLLRGEDDVSKWVKIEEDDEDGFDDEVYPNSNTELHLSLAMVDVEDNDSVSNSSLERSNNSLFSSSSSSSQELQS.

The segment at 162-187 is disordered; the sequence is SSELSEGFSDKDLAKTTGQEKRKISG. The segment covering 169–184 has biased composition (basic and acidic residues); that stretch reads FSDKDLAKTTGQEKRK. Positions 277 to 555 constitute a Protein kinase domain; it reads FSLENLIGKG…RGEDDVSKWV (279 aa). ATP-binding positions include 283 to 291 and K305; that span reads IGKGGCNEV. Phosphotyrosine is present on Y350. Catalysis depends on D399, which acts as the Proton acceptor. A Phosphoserine modification is found at S403. T439 bears the Phosphothreonine mark. Y447 is subject to Phosphotyrosine. The tract at residues 590–617 is disordered; the sequence is DSVSNSSLERSNNSLFSSSSSSSQELQS. Positions 591-617 are enriched in low complexity; sequence SVSNSSLERSNNSLFSSSSSSSQELQS.

This sequence belongs to the protein kinase superfamily. Ser/Thr protein kinase family. Expressed ubiquitously, mostly in roots, to a lower extent in leaves, floral buds and stems, and, at low levels, in flowers and siliques.

It localises to the cytoplasm. In terms of biological role, promotes cell proliferation in the gibberellic acid (GA) signaling pathway, acting downstream of RGA, and possibly through a negative regulation of two cyclin-dependent kinase inhibitors SIM and SMR1. The polypeptide is Protein kinase STUNTED (Arabidopsis thaliana (Mouse-ear cress)).